A 693-amino-acid chain; its full sequence is Testis-specific Y-encoded-like protein 2 (693 aa).

Disordered regions lie at residues 1–56 and 104–125; these read MDRP…EAAQ and GYGE…EASG. Lys-11 is covalently cross-linked (Glycyl lysine isopeptide (Lys-Gly) (interchain with G-Cter in SUMO2)). Phosphoserine occurs at positions 18 and 20. Pro residues predominate over residues 23-44; sequence RDPPPPPPPPPLLRLPLPPPQQ. Glycyl lysine isopeptide (Lys-Gly) (interchain with G-Cter in SUMO2) cross-links involve residues Lys-163 and Lys-165. Positions 175–207 are disordered; that stretch reads EDEDERESMRSSRRRRRRRRRKQRKVKRESRER. Basic residues predominate over residues 185–202; it reads SSRRRRRRRRRKQRKVKR. Thr-340 carries the phosphothreonine modification. Disordered stretches follow at residues 474–605 and 627–693; these read ENIC…DIEY and ISDE…GKTG. Residues 487–496 are compositionally biased toward polar residues; it reads VPNNETTDNN. Over residues 509-519 the composition is skewed to acidic residues; sequence ESADDNNENPE. The span at 531-542 shows a compositional bias: low complexity; it reads NPNNNENTYGNN. Composition is skewed to acidic residues over residues 559 to 602 and 627 to 675; these read SDSD…DDRD and ISDE…DLED. A phosphoserine mark is found at Ser-658, Ser-668, and Ser-671.

The protein belongs to the nucleosome assembly protein (NAP) family. Interacts with histones. Interacts with CASK. Part of a complex containing CASK, TBR1 and TSPYL2. In terms of processing, phosphorylation at Ser-20 and/or Thr-340 impairs function on cell proliferation. Ubiquitously expressed, with highest levels in brain, testis and heart, and lowest levels in liver and pancreas.

It localises to the nucleus. The protein localises to the cytoplasm. Its function is as follows. Part of the CASK/TBR1/TSPYL2 transcriptional complex which modulates gene expression in response to neuronal synaptic activity, probably by facilitating nucleosome assembly. May inhibit cell proliferation by inducing p53-dependent CDKN1A expression. This Homo sapiens (Human) protein is Testis-specific Y-encoded-like protein 2 (TSPYL2).